The following is a 179-amino-acid chain: Large ribosomal subunit protein uL6 (179 aa).

Belongs to the universal ribosomal protein uL6 family. Part of the 50S ribosomal subunit.

This protein binds to the 23S rRNA, and is important in its secondary structure. It is located near the subunit interface in the base of the L7/L12 stalk, and near the tRNA binding site of the peptidyltransferase center. The sequence is that of Large ribosomal subunit protein uL6 from Chloroherpeton thalassium (strain ATCC 35110 / GB-78).